The sequence spans 87 residues: Small ribosomal subunit protein bS20 (87 aa).

The interval Met1–Ala23 is disordered.

It belongs to the bacterial ribosomal protein bS20 family.

In terms of biological role, binds directly to 16S ribosomal RNA. The protein is Small ribosomal subunit protein bS20 of Oleidesulfovibrio alaskensis (strain ATCC BAA-1058 / DSM 17464 / G20) (Desulfovibrio alaskensis).